The primary structure comprises 591 residues: Thiol:disulfide interchange protein DsbD 1 (591 aa).

Residues 1–18 (MRRLLTLILLLVALPAGA) form the signal peptide. Over 19–175 (GLFDSRPGAS…GPLEHKGKRS (157 aa)) the chain is Periplasmic. 2 cysteine pairs are disulfide-bonded: Cys-134/Cys-140 and Cys-191/Cys-313. Residues 176-196 (LLFFFLAGLTLTFTPCVLPML) form a helical membrane-spanning segment. The Cytoplasmic portion of the chain corresponds to 197-213 (PILSGVVLRGRPGGGRG). A helical transmembrane segment spans residues 214–234 (FVLSLAYVLPMALCFALLGAL). Residues 235-251 (MGMFGASLNLQAQLQSP) are Periplasmic-facing. Residues 252–272 (WVLVPFAAFFALFAVAMFGFF) form a helical membrane-spanning segment. Residues 273 to 295 (ELRLPGFIREPLDRLAGDARGGS) are Cytoplasmic-facing. Residues 296–316 (ILGAATLGVLSSLLVSPCVSA) form a helical membrane-spanning segment. Residues 317-338 (PLAASLLYISASGDAWGGGLQL) lie on the Periplasmic side of the membrane. A helical membrane pass occupies residues 339–359 (FALGLGMGTPLVVFGAGGGAL). Residues 360–365 (LPKSGA) lie on the Cytoplasmic side of the membrane. A helical transmembrane segment spans residues 366–386 (WMNGVRNAFGVLLLAVAVWLL). The Periplasmic segment spans residues 387-392 (ERVVSG). A helical membrane pass occupies residues 393 to 413 (PVALMLWGMLAGGAGLALGAL). At 414–423 (EFTPKSAARR) the chain is on the cytoplasmic side. Residues 424-444 (LLQLLGLMFLTYAVAAWIGAL) traverse the membrane as a helical segment. Residues 445–591 (QGESDPIHPL…ERLRRAATRQ (147 aa)) are Periplasmic-facing. Positions 452-589 (HPLGRSVPSI…LAERLRRAAT (138 aa)) constitute a Thioredoxin domain. The cysteines at positions 504 and 507 are disulfide-linked.

The protein belongs to the thioredoxin family. DsbD subfamily.

Its subcellular location is the cell inner membrane. It carries out the reaction [protein]-dithiol + NAD(+) = [protein]-disulfide + NADH + H(+). It catalyses the reaction [protein]-dithiol + NADP(+) = [protein]-disulfide + NADPH + H(+). Functionally, required to facilitate the formation of correct disulfide bonds in some periplasmic proteins and for the assembly of the periplasmic c-type cytochromes. Acts by transferring electrons from cytoplasmic thioredoxin to the periplasm. This transfer involves a cascade of disulfide bond formation and reduction steps. This is Thiol:disulfide interchange protein DsbD 1 from Pseudomonas aeruginosa (strain ATCC 15692 / DSM 22644 / CIP 104116 / JCM 14847 / LMG 12228 / 1C / PRS 101 / PAO1).